The sequence spans 346 residues: Methylthioribose-1-phosphate isomerase 1 (346 aa).

Residues 48 to 50, Arg-91, and Gln-196 contribute to the substrate site; that span reads RGA. Asp-237 acts as the Proton donor in catalysis. 247–248 is a substrate binding site; it reads NK.

This sequence belongs to the eIF-2B alpha/beta/delta subunits family. MtnA subfamily.

The enzyme catalyses 5-(methylsulfanyl)-alpha-D-ribose 1-phosphate = 5-(methylsulfanyl)-D-ribulose 1-phosphate. It functions in the pathway amino-acid biosynthesis; L-methionine biosynthesis via salvage pathway; L-methionine from S-methyl-5-thio-alpha-D-ribose 1-phosphate: step 1/6. Catalyzes the interconversion of methylthioribose-1-phosphate (MTR-1-P) into methylthioribulose-1-phosphate (MTRu-1-P). This Pseudothermotoga lettingae (strain ATCC BAA-301 / DSM 14385 / NBRC 107922 / TMO) (Thermotoga lettingae) protein is Methylthioribose-1-phosphate isomerase 1.